The chain runs to 158 residues: Flagellar assembly factor FliW (158 aa).

Belongs to the FliW family. In terms of assembly, interacts with translational regulator CsrA and flagellin(s).

Its subcellular location is the cytoplasm. Functionally, acts as an anti-CsrA protein, binds CsrA and prevents it from repressing translation of its target genes, one of which is flagellin. Binds to flagellin and participates in the assembly of the flagellum. The polypeptide is Flagellar assembly factor FliW (Syntrophus aciditrophicus (strain SB)).